Reading from the N-terminus, the 631-residue chain is DNA ligase (631 aa).

Residues 37–41 (DAHYD) and 79–80 (ST) each bind NAD(+). Lysine 115 functions as the N6-AMP-lysine intermediate in the catalytic mechanism. NAD(+) contacts are provided by arginine 131, glutamate 160, and lysine 272. Positions 361, 364, 377, and 382 each coordinate Zn(2+). The BRCT domain maps to 539–630 (DVSSPISGKG…SQSSPEQMSL (92 aa)).

This sequence belongs to the NAD-dependent DNA ligase family. LigA subfamily. The cofactor is Mg(2+). Mn(2+) is required as a cofactor.

It carries out the reaction NAD(+) + (deoxyribonucleotide)n-3'-hydroxyl + 5'-phospho-(deoxyribonucleotide)m = (deoxyribonucleotide)n+m + AMP + beta-nicotinamide D-nucleotide.. DNA ligase that catalyzes the formation of phosphodiester linkages between 5'-phosphoryl and 3'-hydroxyl groups in double-stranded DNA using NAD as a coenzyme and as the energy source for the reaction. It is essential for DNA replication and repair of damaged DNA. In Desulfatibacillum aliphaticivorans, this protein is DNA ligase.